A 238-amino-acid polypeptide reads, in one-letter code: Urease accessory protein UreF (238 aa).

It belongs to the UreF family. As to quaternary structure, ureD, UreF and UreG form a complex that acts as a GTP-hydrolysis-dependent molecular chaperone, activating the urease apoprotein by helping to assemble the nickel containing metallocenter of UreC. The UreE protein probably delivers the nickel.

The protein resides in the cytoplasm. In terms of biological role, required for maturation of urease via the functional incorporation of the urease nickel metallocenter. In Delftia acidovorans (strain DSM 14801 / SPH-1), this protein is Urease accessory protein UreF.